The following is a 266-amino-acid chain: Phosphatidate cytidylyltransferase (266 aa).

A run of 8 helical transmembrane segments spans residues F16–A36, L52–A72, P78–A98, S101–Y121, G125–F145, L164–G184, L186–F206, and L237–W257.

It belongs to the CDS family.

Its subcellular location is the cell inner membrane. The catalysed reaction is a 1,2-diacyl-sn-glycero-3-phosphate + CTP + H(+) = a CDP-1,2-diacyl-sn-glycerol + diphosphate. Its pathway is phospholipid metabolism; CDP-diacylglycerol biosynthesis; CDP-diacylglycerol from sn-glycerol 3-phosphate: step 3/3. The chain is Phosphatidate cytidylyltransferase (cdsA) from Helicobacter pylori (strain ATCC 700392 / 26695) (Campylobacter pylori).